We begin with the raw amino-acid sequence, 68 residues long: MTKIKLKTKSSVKKRFHLTAKGKVISTQSGKRHGMVKRSKSNIRNQRGTTILNKSDSRIVKLYMPYGI.

Belongs to the bacterial ribosomal protein bL35 family.

This Wolbachia pipientis subsp. Culex pipiens (strain wPip) protein is Large ribosomal subunit protein bL35.